The primary structure comprises 577 residues: Acyl-coenzyme A synthetase ACSM1, mitochondrial (577 aa).

The N-terminal 31 residues, 1–31 (MQWLMRFRTLWGIHKSFHNIHPAPSQLRCRS), are a transit peptide targeting the mitochondrion. N6-succinyllysine is present on Lys85. Lys146 is modified (N6-acetyllysine; alternate). N6-succinyllysine; alternate is present on Lys146. N6-succinyllysine is present on Lys183. The residue at position 204 (Lys204) is an N6-acetyllysine; alternate. Lys204 is modified (N6-succinyllysine; alternate). Lys214 carries the post-translational modification N6-acetyllysine. 226 to 234 (TSGTTGFPK) is an ATP binding site. N6-succinyllysine is present on Lys237. An N6-acetyllysine; alternate mark is found at Lys356 and Lys391. 2 positions are modified to N6-succinyllysine; alternate: Lys356 and Lys391. Residues Asp452 and Arg467 each contribute to the ATP site. Lys531 is modified (N6-acetyllysine). N6-acetyllysine; alternate is present on Lys538. An N6-succinyllysine; alternate modification is found at Lys538. The residue at position 549 (Lys549) is an N6-acetyllysine. Residue Lys563 participates in ATP binding.

It belongs to the ATP-dependent AMP-binding enzyme family. As to quaternary structure, monomer. The cofactor is Mg(2+). Mn(2+) is required as a cofactor.

It localises to the mitochondrion matrix. The protein localises to the mitochondrion. The catalysed reaction is a medium-chain fatty acid + ATP + CoA = a medium-chain fatty acyl-CoA + AMP + diphosphate. It catalyses the reaction benzoate + ATP + CoA = benzoyl-CoA + AMP + diphosphate. It carries out the reaction (R)-lipoate + GTP + H(+) = (R)-lipoyl-GMP + diphosphate. The enzyme catalyses octanoate + ATP + CoA = octanoyl-CoA + AMP + diphosphate. The catalysed reaction is decanoate + ATP + CoA = decanoyl-CoA + AMP + diphosphate. It catalyses the reaction dodecanoate + ATP + CoA = dodecanoyl-CoA + AMP + diphosphate. It carries out the reaction tetradecanoate + ATP + CoA = tetradecanoyl-CoA + AMP + diphosphate. The enzyme catalyses hexanoate + ATP + CoA = hexanoyl-CoA + AMP + diphosphate. The catalysed reaction is butanoate + ATP + CoA = butanoyl-CoA + AMP + diphosphate. It catalyses the reaction hexadecanoate + ATP + CoA = hexadecanoyl-CoA + AMP + diphosphate. Its activity is regulated as follows. Activated by monovalent cations, such as potassium, rubidium or ammonium. Catalyzes the activation of fatty acids by CoA to produce an acyl-CoA, the first step in fatty acid metabolism. Capable of activating medium-chain fatty acids (e.g. butyric (C4) to decanoic (C10) acids), and certain carboxylate-containing xenobiotics, e.g. benzoate. Also catalyzes the activation of lipoate to lipoyl-nucleoside monophosphate. Activates lipoate with GTP at a 1000-fold higher rate than with ATP and activates both (R)- and (S)-lipoate to the respective lipoyl-GMP, with a preference for (R)-lipoate. The sequence is that of Acyl-coenzyme A synthetase ACSM1, mitochondrial (ACSM1) from Homo sapiens (Human).